The primary structure comprises 122 residues: Large ribosomal subunit protein uL14 (122 aa).

The protein belongs to the universal ribosomal protein uL14 family. Part of the 50S ribosomal subunit. Forms a cluster with proteins L3 and L19. In the 70S ribosome, L14 and L19 interact and together make contacts with the 16S rRNA in bridges B5 and B8.

In terms of biological role, binds to 23S rRNA. Forms part of two intersubunit bridges in the 70S ribosome. The sequence is that of Large ribosomal subunit protein uL14 from Streptococcus pneumoniae (strain JJA).